The following is a 739-amino-acid chain: MDRGTRRIWVSQNQGDTDLDYHKILTAGLTVQQGIVRQKIISVYLVDNLEAMCQLVIQAFEAGIDFQENADSFLLMLCLHHAYQGDYKLFLESNAVQYLEGHGFKFELRKKDGVNRLEELLPAATSGKNIRRTLAALPEEETTEANAGQFLSFASLFLPKLVVGEKACLEKVQRQIQVHAEQGLIQYPTAWQSVGHMMVIFRLMRTNFLIKYLLIHQGMHMVAGHDANDAVIANSVAQARFSGLLIVKTVLDHILQKTDQGVRLHPLARTAKVRNEVNAFKAALSSLAKHGEYAPFARLLNLSGVNNLEHGLYPQLSAIALGVATAHGSTLAGVNVGEQYQQLREAATEAEKQLQQYAESRELDSLGLDDQERRILMNFHQKKNEISFQQTNAMVTLRKERLAKLTEAITLASRPNLGSRQDDGNEIPFPGPISNNPDQDHLEDDPRDSRDTIIPNGAIDPEDGDFENYNGYHDDEVGTAGDLVLFDLDDHEDDNKAFEPQDSSPQSQREIERERLIHPPPGNNKDDNRASDNNQQSADSEEQGGQYNWHRGPERTTANRRLSPVHEEDTLMDQGDDDPSSLPPLESDDDDASSSQQDPDYTAVAPPAPVYRSAEAHEPPHKSSNEPAETSQLNEDPDIGQSKSMQKLEETYHHLLRTQGPFEAINYYHMMKDEPVIFSTDDGKEYTYPDSLEEAYPPWLTEKERLDKENRYIYINNQQFFWPVMSPRDKFLAILQHHQ.

Residues 334–363 (VNVGEQYQQLREAATEAEKQLQQYAESREL) are a coiled coil. Disordered stretches follow at residues 414 to 475 (RPNL…YHDD) and 493 to 641 (DDNK…DIGQ). Over residues 531–546 (SDNNQQSADSEEQGGQ) the composition is skewed to polar residues. A compositionally biased stretch (acidic residues) spans 570 to 579 (TLMDQGDDDP). Over residues 614–624 (AEAHEPPHKSS) the composition is skewed to basic and acidic residues. Residues 625-634 (NEPAETSQLN) are compositionally biased toward polar residues.

Belongs to the filoviruses nucleoprotein family. In terms of assembly, homooligomer. Homomultimerizes to form the nucleocapsid. Binds to viral genomic RNA. Interacts with VP35 and VP30 to form the nucleocapsid. Interacts with host PPP2R5C; this interaction leads to VP30 dephosphorylation and viral transcription. Interacts with VP24; this interaction facilitates nucleocapsid assembly and genome packaging. Interacts with matrix protein VP40; this interaction allows recruitment of the nucleocapsid into progeny virions. Interacts with host STAU1. Interacts with host NXF1 (via RNA-binding domain); this interaction recruits NXF1 to the inclusion bodies were viral replication takes place, probably to export viral mRNA-NXF1 complexes from these sites. Interacts with host CCDC92; this interaction sequesters NP in the host cytoplasm. Interacts with host TRIM14. Post-translationally, phosphorylated and O-glycosylated by host. Acetylated by host EP300 in vitro.

Its subcellular location is the virion. The protein resides in the host cytoplasm. Oligomerizes into helical capsid to encapsidate the viral genome, protecting it from nucleases and the cellular innate immune response. VP35 binds to and stabilizes monomeric NP, keeping it soluble. Upon virus replication, NP is recruited to bind cooperatively viral genomic RNA and VP35 is released. The encapsidated genomic RNA is termed the nucleocapsid and serves as template for transcription and replication. The nucleocapsid is helical with a pitch of 10.81 NP per turn and a diameter of about 22nm. Each NP binds to six nucleotides of viral genomic RNA, three being exposed to the solvant and three hidden into the nucleocapsid. Also recruits host PPP2R5C phosphatase to dephosphorylate VP30 and thereby promote viral transcription. Upon virion assembly and budding, NP binds to VP24 and possibly host STAU1. This chain is Nucleoprotein (NP), found in Reston ebolavirus (strain Reston-89) (REBOV).